A 307-amino-acid polypeptide reads, in one-letter code: tRNA dimethylallyltransferase (307 aa).

6-13 (GATATGKT) is an ATP binding site. 8 to 13 (TATGKT) provides a ligand contact to substrate. The interval 31–34 (DSMM) is interaction with substrate tRNA.

The protein belongs to the IPP transferase family. Monomer. The cofactor is Mg(2+).

It carries out the reaction adenosine(37) in tRNA + dimethylallyl diphosphate = N(6)-dimethylallyladenosine(37) in tRNA + diphosphate. Functionally, catalyzes the transfer of a dimethylallyl group onto the adenine at position 37 in tRNAs that read codons beginning with uridine, leading to the formation of N6-(dimethylallyl)adenosine (i(6)A). The protein is tRNA dimethylallyltransferase of Sulfurihydrogenibium sp. (strain YO3AOP1).